Consider the following 731-residue polypeptide: Auxin response factor 3 (731 aa).

Residues 1 to 22 are compositionally biased toward low complexity; sequence MASSASSSSSPSSRPPLMALPS. Residues 1 to 41 are disordered; it reads MASSASSSSSPSSRPPLMALPSFYRPPWPSERGGEQRATDC. Positions 191–293 form a DNA-binding region, TF-B3; the sequence is FCKTLTASDT…ELRLGVRRAT (103 aa).

Belongs to the ARF family. Homo and heterodimers. As to expression, expressed in roots, culms, leaves and young panicles.

It localises to the nucleus. In terms of biological role, auxin response factors (ARFs) are transcriptional factors that bind specifically to the DNA sequence 5'-TGTCTC-3' found in the auxin-responsive promoter elements (AuxREs). The protein is Auxin response factor 3 (ARF3) of Oryza sativa subsp. japonica (Rice).